A 546-amino-acid polypeptide reads, in one-letter code: Alkaline phosphatase PafA (546 aa).

An N-terminal signal peptide occupies residues 1 to 25 (MLTPKKWLLGVLVVSGMLGAQKTNA). Zn(2+) contacts are provided by aspartate 38 and threonine 79. Threonine 79 serves as the catalytic Phosphothreonine intermediate. Residues asparagine 100 and 162 to 164 (KDR) each bind substrate. The Zn(2+) site is built by aspartate 305, histidine 309, aspartate 352, histidine 353, and histidine 486.

The cofactor is Zn(2+).

The protein resides in the periplasm. It carries out the reaction a phosphate monoester + H2O = an alcohol + phosphate. Strongly inhibited by orthovanadate and EDTA. Also inhibited by inorganic phosphate. In terms of biological role, alkaline phosphatase with broad substrate specificity. Has phosphatase activity towards nucleotide phosphates with a preference for ATP. Active towards a great variety of phosphomonoesters with the exception of 2',3'-cyclic AMP and myo-inositol hexakisphosphate. This is Alkaline phosphatase PafA from Elizabethkingia meningoseptica (Chryseobacterium meningosepticum).